Reading from the N-terminus, the 189-residue chain is Interferon alpha-1/13 (189 aa).

A signal peptide spans 1 to 23; sequence MASPFALLMVLVVLSCKSSCSLG. Disulfide bonds link Cys24-Cys122 and Cys52-Cys162.

It belongs to the alpha/beta interferon family. In terms of assembly, interacts with CR2.

It is found in the secreted. Produced by macrophages, IFN-alpha have antiviral activities. Interferon stimulates the production of two enzymes: a protein kinase and an oligoadenylate synthetase. This Homo sapiens (Human) protein is Interferon alpha-1/13 (IFNA1).